Reading from the N-terminus, the 77-residue chain is Mitochondrial import inner membrane translocase subunit TIM8 (77 aa).

Met1 is subject to N-acetylmethionine. The Twin CX3C motif motif lies at 35 to 59; sequence CWDKCITSAPGSKFSSSESSCLTHC. Intrachain disulfides connect Cys35–Cys59 and Cys39–Cys55.

It belongs to the small Tim family. As to quaternary structure, heterohexamer; composed of 3 copies of TIM8 and 3 copies of TIM13, named soluble 70 kDa complex. Associates with the TIM22 complex, whose core is composed of TIM22. As to expression, expressed in roots, flowers, young cotyledons and leaves.

The protein resides in the mitochondrion intermembrane space. Mitochondrial intermembrane chaperone that participates in the import and insertion of some multi-pass transmembrane proteins into the mitochondrial inner membrane. Also required for the transfer of beta-barrel precursors from the TOM complex to the sorting and assembly machinery (SAM complex) of the outer membrane. Acts as a chaperone-like protein that protects the hydrophobic precursors from aggregation and guide them through the mitochondrial intermembrane space. The TIM8-TIM13 complex mediates the import of some proteins while the predominant TIM9-TIM10 70 kDa complex mediates the import of much more proteins. The sequence is that of Mitochondrial import inner membrane translocase subunit TIM8 (TIM8) from Arabidopsis thaliana (Mouse-ear cress).